The following is a 287-amino-acid chain: MSRSSATLIGFTAILLWSTLALATSSTGAVPPFLLTALTFTIGGAVGIAAGLARGVGLSVLRQPWPVWVHGIGGLFGYHFFYFSALKLAPPAEAGLVAYLWPLLIVLFSAFLPGERLRPAHVAGALMGLAGTVVLLGARAGGFGFAPEYVPGYLAAAACAVIWSVYSVASRRFARVPTEVVAGFCLATAALSALCHILFEPSVWPVGSEWLAVVALGIGPVGIAFYTWDIGMKRGDVRLLGVLSYAAPVLSTLLLVVAGFAAPSGALAIACALIVGGAAVATLLARR.

Residues 1–5 (MSRSS) lie on the Cytoplasmic side of the membrane. Residues 6–24 (ATLIGFTAILLWSTLALAT) traverse the membrane as a helical segment. The EamA 1 domain occupies 7–136 (TLIGFTAILL…MGLAGTVVLL (130 aa)). Over 25-31 (SSTGAVP) the chain is Periplasmic. A helical transmembrane segment spans residues 32–54 (PFLLTALTFTIGGAVGIAAGLAR). At 55–65 (GVGLSVLRQPW) the chain is on the cytoplasmic side. The helical transmembrane segment at 66-86 (PVWVHGIGGLFGYHFFYFSAL) threads the bilayer. Topologically, residues 87–90 (KLAP) are periplasmic. Residues 91–111 (PAEAGLVAYLWPLLIVLFSAF) traverse the membrane as a helical segment. Residues 112–118 (LPGERLR) lie on the Cytoplasmic side of the membrane. The chain crosses the membrane as a helical span at residues 119–139 (PAHVAGALMGLAGTVVLLGAR). The Periplasmic portion of the chain corresponds to 140–149 (AGGFGFAPEY). Residues 150–170 (VPGYLAAAACAVIWSVYSVAS) traverse the membrane as a helical segment. One can recognise an EamA 2 domain in the interval 151–281 (PGYLAAAACA…ALIVGGAAVA (131 aa)). Residues 171-176 (RRFARV) are Cytoplasmic-facing. The helical transmembrane segment at 177–198 (PTEVVAGFCLATAALSALCHIL) threads the bilayer. The Periplasmic portion of the chain corresponds to 199–208 (FEPSVWPVGS). Residues 209–233 (EWLAVVALGIGPVGIAFYTWDIGMK) traverse the membrane as a helical segment. Residues 234-236 (RGD) lie on the Cytoplasmic side of the membrane. Residues 237 to 258 (VRLLGVLSYAAPVLSTLLLVVA) form a helical membrane-spanning segment. Residues 259–264 (GFAAPS) are Periplasmic-facing. The helical transmembrane segment at 265–284 (GALAIACALIVGGAAVATLL) threads the bilayer. The Cytoplasmic portion of the chain corresponds to 285 to 287 (ARR).

The protein belongs to the drug/metabolite transporter (DMT) superfamily. Aromatic amino acid/paraquat exporter (ArAA/P-E) (TC 2.A.7.17) family.

It localises to the cell inner membrane. The catalysed reaction is L-threonine(in) = L-threonine(out). It carries out the reaction L-methionine(in) = L-methionine(out). The enzyme catalyses L-lysine(in) = L-lysine(out). It catalyses the reaction L-glutamate(out) = L-glutamate(in). In terms of biological role, amino acid transporter with broad substrate specificity. Can transport various amino acids, including L-threonine, L-methionine, L-lysine and L-glutamate. This Ancylobacter novellus (strain ATCC 8093 / DSM 506 / JCM 20403 / CCM 1077 / IAM 12100 / NBRC 12443 / NCIMB 10456) (Starkeya novella) protein is Aromatic amino acid exporter YddG.